The following is a 517-amino-acid chain: Bifunctional purine biosynthesis protein PurH (517 aa).

One can recognise an MGS-like domain in the interval Met1–Val145.

The protein belongs to the PurH family.

It carries out the reaction (6R)-10-formyltetrahydrofolate + 5-amino-1-(5-phospho-beta-D-ribosyl)imidazole-4-carboxamide = 5-formamido-1-(5-phospho-D-ribosyl)imidazole-4-carboxamide + (6S)-5,6,7,8-tetrahydrofolate. The enzyme catalyses IMP + H2O = 5-formamido-1-(5-phospho-D-ribosyl)imidazole-4-carboxamide. It participates in purine metabolism; IMP biosynthesis via de novo pathway; 5-formamido-1-(5-phospho-D-ribosyl)imidazole-4-carboxamide from 5-amino-1-(5-phospho-D-ribosyl)imidazole-4-carboxamide (10-formyl THF route): step 1/1. It functions in the pathway purine metabolism; IMP biosynthesis via de novo pathway; IMP from 5-formamido-1-(5-phospho-D-ribosyl)imidazole-4-carboxamide: step 1/1. The protein is Bifunctional purine biosynthesis protein PurH of Prochlorococcus marinus subsp. pastoris (strain CCMP1986 / NIES-2087 / MED4).